A 251-amino-acid polypeptide reads, in one-letter code: Probable transcriptional regulatory protein Cgl1663/cg1872 (251 aa).

The disordered stretch occupies residues 1–22 (MSGHSKWATTKHKKAANDAKRG).

The protein belongs to the TACO1 family.

Its subcellular location is the cytoplasm. This is Probable transcriptional regulatory protein Cgl1663/cg1872 from Corynebacterium glutamicum (strain ATCC 13032 / DSM 20300 / JCM 1318 / BCRC 11384 / CCUG 27702 / LMG 3730 / NBRC 12168 / NCIMB 10025 / NRRL B-2784 / 534).